The primary structure comprises 103 residues: N(4)-acetylcytidine amidohydrolase (103 aa).

An ASCH domain is found at 6 to 101 (ITFFQRFQDD…QIQFYVIEFK (96 aa)). K21 functions as the Proton acceptor in the catalytic mechanism. Catalysis depends on T24, which acts as the Nucleophile. E74 functions as the Proton donor in the catalytic mechanism.

The protein belongs to the N(4)-acetylcytidine amidohydrolase family.

The catalysed reaction is N(4)-acetylcytidine + H2O = cytidine + acetate + H(+). It catalyses the reaction N(4)-acetyl-2'-deoxycytidine + H2O = 2'-deoxycytidine + acetate + H(+). It carries out the reaction N(4)-acetylcytosine + H2O = cytosine + acetate + H(+). Functionally, catalyzes the hydrolysis of N(4)-acetylcytidine (ac4C). The sequence is that of N(4)-acetylcytidine amidohydrolase (yqfB) from Escherichia coli (strain SMS-3-5 / SECEC).